The sequence spans 94 residues: DNA-binding protein HU (94 aa).

The tract at residues 56-94 (QKGKEGKVPGSDKTYKTEDKRVPKFKPGKTLKQKVEEGK) is disordered. A compositionally biased stretch (basic and acidic residues) spans 68–77 (KTYKTEDKRV). Over residues 78 to 87 (PKFKPGKTLK) the composition is skewed to basic residues.

Belongs to the bacterial histone-like protein family. Homodimer.

Its function is as follows. Histone-like DNA-binding protein which is capable of wrapping DNA to stabilize it, and thus to prevent its denaturation under extreme environmental conditions. This is DNA-binding protein HU (hup) from Helicobacter pylori (strain ATCC 700392 / 26695) (Campylobacter pylori).